We begin with the raw amino-acid sequence, 346 residues long: Peroxidase 19 (346 aa).

A signal peptide spans 1–31; the sequence is MHVISLSLSSIFFFLFLTSTILISPVQPTTS. 4 disulfide bridges follow: cysteine 51–cysteine 134, cysteine 84–cysteine 89, cysteine 140–cysteine 342, and cysteine 219–cysteine 251. Histidine 82 functions as the Proton acceptor in the catalytic mechanism. Residues aspartate 83, valine 86, glycine 88, aspartate 90, and serine 92 each coordinate Ca(2+). Residue proline 182 participates in substrate binding. A glycan (N-linked (GlcNAc...) asparagine) is linked at asparagine 185. Histidine 212 provides a ligand contact to heme b. A Ca(2+)-binding site is contributed by threonine 213. The Ca(2+) site is built by aspartate 265, threonine 268, and aspartate 273.

The protein belongs to the peroxidase family. Classical plant (class III) peroxidase subfamily. Heme b serves as cofactor. Requires Ca(2+) as cofactor.

The protein resides in the secreted. It carries out the reaction 2 a phenolic donor + H2O2 = 2 a phenolic radical donor + 2 H2O. In terms of biological role, removal of H(2)O(2), oxidation of toxic reductants, biosynthesis and degradation of lignin, suberization, auxin catabolism, response to environmental stresses such as wounding, pathogen attack and oxidative stress. These functions might be dependent on each isozyme/isoform in each plant tissue. The protein is Peroxidase 19 (PER19) of Arabidopsis thaliana (Mouse-ear cress).